Reading from the N-terminus, the 362-residue chain is Phosphoserine aminotransferase (362 aa).

L-glutamate-binding residues include Ser-9 and Arg-42. Residues 76-77, Trp-102, Thr-153, Asp-174, and Gln-197 contribute to the pyridoxal 5'-phosphate site; that span reads GR. Lys-198 is modified (N6-(pyridoxal phosphate)lysine). 239–240 contacts pyridoxal 5'-phosphate; sequence NT.

This sequence belongs to the class-V pyridoxal-phosphate-dependent aminotransferase family. SerC subfamily. As to quaternary structure, homodimer. The cofactor is pyridoxal 5'-phosphate.

It is found in the cytoplasm. The catalysed reaction is O-phospho-L-serine + 2-oxoglutarate = 3-phosphooxypyruvate + L-glutamate. It carries out the reaction 4-(phosphooxy)-L-threonine + 2-oxoglutarate = (R)-3-hydroxy-2-oxo-4-phosphooxybutanoate + L-glutamate. It functions in the pathway amino-acid biosynthesis; L-serine biosynthesis; L-serine from 3-phospho-D-glycerate: step 2/3. Its pathway is cofactor biosynthesis; pyridoxine 5'-phosphate biosynthesis; pyridoxine 5'-phosphate from D-erythrose 4-phosphate: step 3/5. Catalyzes the reversible conversion of 3-phosphohydroxypyruvate to phosphoserine and of 3-hydroxy-2-oxo-4-phosphonooxybutanoate to phosphohydroxythreonine. The chain is Phosphoserine aminotransferase from Shigella dysenteriae serotype 1 (strain Sd197).